A 364-amino-acid polypeptide reads, in one-letter code: Medium-wave-sensitive opsin 2 (364 aa).

The disordered stretch occupies residues 1 to 23; that stretch reads MAQQWSLQRLAGRHPQDSYEDST. Residues 1–52 lie on the Extracellular side of the membrane; the sequence is MAQQWSLQRLAGRHPQDSYEDSTQSSIFTYTNSNSTRGPFEGPNYHIAPRWV. Residues 17 to 43 form a required for 11-cis-retinal regeneration region; sequence DSYEDSTQSSIFTYTNSNSTRGPFEGP. A glycan (N-linked (GlcNAc...) asparagine) is linked at Asn34. A helical transmembrane segment spans residues 53–77; that stretch reads YHLTSVWMIFVVIASVFTNGLVLAA. The Cytoplasmic portion of the chain corresponds to 78-89; the sequence is TMKFKKLRHPLN. Residues 90–115 form a helical membrane-spanning segment; sequence WILVNLAVADLAETVIASTISVVNQV. The Extracellular segment spans residues 116-129; it reads YGYFVLGHPMCVLE. A disulfide bridge connects residues Cys126 and Cys203. A helical membrane pass occupies residues 130-149; it reads GYTVSLCGITGLWSLAIISW. Residues 150 to 168 are Cytoplasmic-facing; it reads ERWMVVCKPFGNVRFDAKL. A helical transmembrane segment spans residues 169–192; the sequence is AIVGIAFSWIWAAVWTAPPIFGWS. Topologically, residues 193–218 are extracellular; it reads RYWPHGLKTSCGPDVFSGSSYPGVQS. Residues 219 to 246 traverse the membrane as a helical segment; that stretch reads YMIVLMVTCCITPLSIIVLCYLQVWLAI. Topologically, residues 247 to 268 are cytoplasmic; the sequence is RAVAKQQKESESTQKAEKEVTR. Residues 269–292 form a helical membrane-spanning segment; that stretch reads MVVVMVLAFCFCWGPYAFFACFAA. The Extracellular portion of the chain corresponds to 293–300; the sequence is ANPGYPFH. Residues 301-325 traverse the membrane as a helical segment; that stretch reads PLMAALPAFFAKSATIYNPVIYVFM. Lys312 carries the post-translational modification N6-(retinylidene)lysine. Residues 326-364 are Cytoplasmic-facing; sequence NRQFRNCILQLFGKKVDDGSELSSASKTEVSSVSSVSPA.

It belongs to the G-protein coupled receptor 1 family. Opsin subfamily. N-glycosylated. O-glycosylated. In terms of processing, phosphorylated on some or all of the serine and threonine residues present in the C-terminal region.

It localises to the cell membrane. Visual pigments are the light-absorbing molecules that mediate vision. They consist of an apoprotein, opsin, covalently linked to cis-retinal. This Homo sapiens (Human) protein is Medium-wave-sensitive opsin 2.